The sequence spans 95 residues: MTDTIGAGQPGQDAFPPVEELSYEQARDELIETVKILELGQMGLDESLKYWERGEALAKACEAHLDGASKRVEEALRKNAEGTDSAAHNEEAGED.

The protein belongs to the XseB family. In terms of assembly, heterooligomer composed of large and small subunits.

Its subcellular location is the cytoplasm. It carries out the reaction Exonucleolytic cleavage in either 5'- to 3'- or 3'- to 5'-direction to yield nucleoside 5'-phosphates.. Bidirectionally degrades single-stranded DNA into large acid-insoluble oligonucleotides, which are then degraded further into small acid-soluble oligonucleotides. In Corynebacterium aurimucosum (strain ATCC 700975 / DSM 44827 / CIP 107346 / CN-1) (Corynebacterium nigricans), this protein is Exodeoxyribonuclease 7 small subunit.